The chain runs to 52 residues: Teratocyte protein CftICK-I (52 aa).

Positions 1–19 are cleaved as a signal peptide; it reads MYKLCILFLVVIFAVMAIA. Cystine bridges form between C22–C37, C29–C41, and C36–C51.

Abundantly expressed by teratocytes, which are extra-embryonic cells released by parasitoid wasps into their hosts during larval eclosion.

It is found in the secreted. Its function is as follows. This endoparasitoid wasp peptide has immununosuppressive, antimicrobial and insecticidal activities. Suppress cellular immunity which is detectable as a reduction of hemocyte encapsulation in the host. Shows potent antifungal activity against C.albicans (MIC~0.25 ug/ml). In vivo, ingestion of this peptide (probably at excessive doses) increases larval mortality and reduces leaf consumption of D.saccharalis, a permissive host for C.flavipes. This chain is Teratocyte protein CftICK-I, found in Cotesia flavipes (Parasitic wasp).